Consider the following 494-residue polypeptide: V-type proton ATPase subunit B (494 aa).

It belongs to the ATPase alpha/beta chains family. V-ATPase is a heteromultimeric enzyme composed of a peripheral catalytic V1 complex (main components: subunits A, B, C, D, E, and F) attached to an integral membrane V0 proton pore complex (main component: the proteolipid protein).

Functionally, non-catalytic subunit of the peripheral V1 complex of vacuolar ATPase. V-ATPase is responsible for acidifying a variety of intracellular compartments in eukaryotic cells. In Plasmodium falciparum, this protein is V-type proton ATPase subunit B (VAPB).